The sequence spans 446 residues: Maltoporin (446 aa).

Residues 1 to 25 form the signal peptide; sequence MMITLRKLPLAVAVAAGVMSAQAMA.

It belongs to the porin LamB (TC 1.B.3) family. Homotrimer formed of three 18-stranded antiparallel beta-barrels, containing three independent channels.

Its subcellular location is the cell outer membrane. The enzyme catalyses beta-maltose(in) = beta-maltose(out). In terms of biological role, involved in the transport of maltose and maltodextrins. In Escherichia coli O6:K15:H31 (strain 536 / UPEC), this protein is Maltoporin.